The chain runs to 83 residues: Three-finger toxin MALT0052C (83 aa).

An N-terminal signal peptide occupies residues 1-21 (MKTLLLTLVVVTIVCLDFGHT). 4 cysteine pairs are disulfide-bonded: cysteine 24–cysteine 45, cysteine 38–cysteine 62, cysteine 64–cysteine 75, and cysteine 76–cysteine 81.

It belongs to the three-finger toxin family. Short-chain subfamily. Type I alpha-neurotoxin sub-subfamily. Expressed by the venom gland.

The protein localises to the secreted. In terms of biological role, binds to muscle nicotinic acetylcholine receptor (nAChR) and inhibit acetylcholine from binding to the receptor, thereby impairing neuromuscular transmission. This is Three-finger toxin MALT0052C from Micrurus altirostris (Uruguayan coral snake).